The sequence spans 217 residues: Putative peroxiredoxin Q, chloroplastic (217 aa).

Residues 1–66 constitute a chloroplast transit peptide; sequence MAFAVSTACR…PSTTGRNRIV (66 aa). Residues 70–217 enclose the Thioredoxin domain; the sequence is VSKGSAAPNF…GETLKILQSL (148 aa). The Cysteine sulfenic acid (-SOH) intermediate role is filled by cysteine 112. Cysteine 112 and cysteine 117 are oxidised to a cystine.

This sequence belongs to the peroxiredoxin family. BCP/PrxQ subfamily. In terms of assembly, monomer.

It is found in the plastid. The protein resides in the chloroplast thylakoid lumen. The enzyme catalyses a hydroperoxide + [thioredoxin]-dithiol = an alcohol + [thioredoxin]-disulfide + H2O. Its function is as follows. Thiol-specific peroxidase that catalyzes the reduction of hydrogen peroxide and organic hydroperoxides to water and alcohols, respectively. Plays a role in cell protection against oxidative stress by detoxifying peroxides. The polypeptide is Putative peroxiredoxin Q, chloroplastic (Oryza sativa subsp. indica (Rice)).